The sequence spans 1374 residues: Tonsoku-like protein (1374 aa).

TPR repeat units lie at residues A27 to T60, A67 to L100, Q107 to S140, T162 to N195, F202 to L235, S242 to K275, M311 to L344, and A352 to N385. Residues K460 to L508 are disordered. A compositionally biased stretch (acidic residues) spans D464 to E507. ANK repeat units follow at residues V526–Y558, C559–G591, and D595–R627. The disordered stretch occupies residues G668 to S777. Residues H672–S682 are compositionally biased toward polar residues. Positions T690–G699 are enriched in pro residues. Phosphoserine is present on S711. Low complexity predominate over residues S731–S744. Omega-N-methylarginine is present on R788. The disordered stretch occupies residues E829–V908. LRR repeat units lie at residues H1065–T1089, V1093–Q1121, L1124–S1147, T1184–G1207, G1243–R1266, C1271–T1296, and V1327–Q1350.

Belongs to the Tonsoku family. As to quaternary structure, component of the MMS22L-TONSL complex, a complex at least composed of MMS22L and TONSL/NFKBIL2. Interacts with the MCM complex, the FACT complex and the RPA complex. Interacts with MCM5; the interaction is direct. Binds histones, with a strong preference for histone H3.1 (histones H3.1 and H3-4/H3.1t). Interacts (via ANK repeats) with histone H4; specifically binds histone H4 lacking methylation at 'Lys-20' (H4K20me0). May interact with DNAJC9; the interaction seems to be histone-dependent.

It is found in the nucleus. It localises to the chromosome. The protein resides in the cytoplasm. Functionally, component of the MMS22L-TONSL complex, a complex that promotes homologous recombination-mediated repair of double-strand breaks (DSBs) at stalled or collapsed replication forks. The MMS22L-TONSL complex is required to maintain genome integrity during DNA replication. It mediates the assembly of RAD51 filaments on single-stranded DNA (ssDNA): the MMS22L-TONSL complex is recruited to DSBs following histone replacement by histone chaperones and eviction of the replication protein A complex (RPA/RP-A) from DSBs. Following recruitment to DSBs, the TONSL-MMS22L complex promotes recruitment of RAD51 filaments and subsequent homologous recombination. Within the complex, TONSL acts as a histone reader, which recognizes and binds newly synthesized histones following their replacement by histone chaperones. Specifically binds histone H4 lacking methylation at 'Lys-20' (H4K20me0) and histone H3.1. The sequence is that of Tonsoku-like protein (TONSL) from Bos taurus (Bovine).